The following is a 69-amino-acid chain: FXYD domain-containing ion transport regulator 11 (69 aa).

An N-terminal signal peptide occupies residues 1-22; that stretch reads MSQLTELVLLTVFLALFSRAEA. The Extracellular portion of the chain corresponds to 23–33; sequence NPFVYNYEALR. The chain crosses the membrane as a helical span at residues 34-54; the sequence is IGGLVFTCVLVAGAVTALCWG. Over 55–69 the chain is Cytoplasmic; the sequence is QCKPKRKHDDDASKI.

It belongs to the FXYD family. In terms of tissue distribution, detected in adult gill and in larval skin at 2 days post-fertilization (at protein level). In adult gill, strong expression is found in the basal regions of the secondary lamellae.

The protein localises to the cell membrane. Its function is as follows. May modulate the activity of a sodium/potassium-transporting ATPase. The protein is FXYD domain-containing ion transport regulator 11 of Danio rerio (Zebrafish).